The primary structure comprises 145 residues: Peptide methionine sulfoxide reductase MsrB (145 aa).

The MsrB domain occupies 4–127 (SDELKQRIGE…NSAALKFIPY (124 aa)). Cys-116 (nucleophile) is an active-site residue.

The protein belongs to the MsrB Met sulfoxide reductase family.

The enzyme catalyses L-methionyl-[protein] + [thioredoxin]-disulfide + H2O = L-methionyl-(R)-S-oxide-[protein] + [thioredoxin]-dithiol. The polypeptide is Peptide methionine sulfoxide reductase MsrB (Streptococcus pyogenes serotype M3 (strain ATCC BAA-595 / MGAS315)).